The following is a 358-amino-acid chain: Dual-specificity RNA methyltransferase RlmN (358 aa).

Catalysis depends on Glu86, which acts as the Proton acceptor. The 234-residue stretch at 105-338 folds into the Radical SAM core domain; the sequence is RHKRYTICVS…CTIRQSKGLD (234 aa). The cysteines at positions 112 and 343 are disulfide-linked. Positions 119, 123, and 126 each coordinate [4Fe-4S] cluster. Residues 169-170, Ser201, 224-226, and Asn300 contribute to the S-adenosyl-L-methionine site; these read GE and SLH. Cys343 (S-methylcysteine intermediate) is an active-site residue.

This sequence belongs to the radical SAM superfamily. RlmN family. It depends on [4Fe-4S] cluster as a cofactor.

It localises to the cytoplasm. The catalysed reaction is adenosine(2503) in 23S rRNA + 2 reduced [2Fe-2S]-[ferredoxin] + 2 S-adenosyl-L-methionine = 2-methyladenosine(2503) in 23S rRNA + 5'-deoxyadenosine + L-methionine + 2 oxidized [2Fe-2S]-[ferredoxin] + S-adenosyl-L-homocysteine. It catalyses the reaction adenosine(37) in tRNA + 2 reduced [2Fe-2S]-[ferredoxin] + 2 S-adenosyl-L-methionine = 2-methyladenosine(37) in tRNA + 5'-deoxyadenosine + L-methionine + 2 oxidized [2Fe-2S]-[ferredoxin] + S-adenosyl-L-homocysteine. In terms of biological role, specifically methylates position 2 of adenine 2503 in 23S rRNA and position 2 of adenine 37 in tRNAs. m2A2503 modification seems to play a crucial role in the proofreading step occurring at the peptidyl transferase center and thus would serve to optimize ribosomal fidelity. The sequence is that of Dual-specificity RNA methyltransferase RlmN from Campylobacter hominis (strain ATCC BAA-381 / DSM 21671 / CCUG 45161 / LMG 19568 / NCTC 13146 / CH001A).